The chain runs to 681 residues: Protein asunder (681 aa).

The segment at 574-619 (PGASHLRSYTESPLSPERLEPTSSASNSSSSILKASKRRMSSSGQR) is disordered. Positions 606 to 612 (LKASKRR) match the Nuclear localization signal (NLS) motif.

It belongs to the Integrator subunit 13 family. As to quaternary structure, belongs to the multiprotein complex Integrator, at least composed of IntS1, IntS2, IntS3, IntS4, omd/IntS5, IntS6, defl/IntS7, IntS8, IntS9, IntS10, IntS11, IntS12, asun/IntS13, IntS14 and IntS15. The core complex associates with protein phosphatase 2A subunits mts/PP2A and Pp2A-29B, to form the Integrator-PP2A (INTAC) complex. Phosphorylated.

The protein resides in the nucleus. The protein localises to the cytoplasm. It is found in the perinuclear region. In terms of biological role, component of the integrator complex, a multiprotein complex that terminates RNA polymerase II (Pol II) transcription in the promoter-proximal region of genes. The integrator complex provides a quality checkpoint during transcription elongation by driving premature transcription termination of transcripts that are unfavorably configured for transcriptional elongation: the complex terminates transcription by (1) catalyzing dephosphorylation of the C-terminal domain (CTD) of Pol II subunit Polr2A/Rbp1 and Spt5, and (2) degrading the exiting nascent RNA transcript via endonuclease activity. The integrator complex is also involved in the 3'-end processing of the U7 snRNA, and also the spliceosomal snRNAs U1, U2, U4 and U5. This is Protein asunder (asun) from Drosophila virilis (Fruit fly).